A 116-amino-acid polypeptide reads, in one-letter code: NADH-ubiquinone oxidoreductase chain 3 (116 aa).

Transmembrane regions (helical) follow at residues 3–23 (LITTIIAITITLSAVLATVSF), 56–76 (FFLIAILFLLFDLEIALLLPL), and 85–105 (PALTLAWSAAVLALLTLGLIY).

Belongs to the complex I subunit 3 family.

Its subcellular location is the mitochondrion membrane. The enzyme catalyses a ubiquinone + NADH + 5 H(+)(in) = a ubiquinol + NAD(+) + 4 H(+)(out). Core subunit of the mitochondrial membrane respiratory chain NADH dehydrogenase (Complex I) that is believed to belong to the minimal assembly required for catalysis. Complex I functions in the transfer of electrons from NADH to the respiratory chain. The immediate electron acceptor for the enzyme is believed to be ubiquinone. This Salmo trutta (Brown trout) protein is NADH-ubiquinone oxidoreductase chain 3 (MT-ND3).